The sequence spans 579 residues: 2-isopropylmalate synthase (579 aa).

Positions 40-314 constitute a Pyruvate carboxyltransferase domain; sequence PRWCAVDLRD…DPMIDFSDID (275 aa). Positions 49, 253, 255, and 289 each coordinate Mg(2+). Residues 456–579 are regulatory domain; that stretch reads SSKEDGQWGR…VNRAIRDAQA (124 aa).

The protein belongs to the alpha-IPM synthase/homocitrate synthase family. LeuA type 2 subfamily. Homodimer. Mg(2+) is required as a cofactor.

It is found in the cytoplasm. It catalyses the reaction 3-methyl-2-oxobutanoate + acetyl-CoA + H2O = (2S)-2-isopropylmalate + CoA + H(+). It participates in amino-acid biosynthesis; L-leucine biosynthesis; L-leucine from 3-methyl-2-oxobutanoate: step 1/4. Functionally, catalyzes the condensation of the acetyl group of acetyl-CoA with 3-methyl-2-oxobutanoate (2-ketoisovalerate) to form 3-carboxy-3-hydroxy-4-methylpentanoate (2-isopropylmalate). This is 2-isopropylmalate synthase from Arthrobacter sp. (strain FB24).